We begin with the raw amino-acid sequence, 396 residues long: Acetylornithine aminotransferase 2 (396 aa).

Residues 102–103 and Phe134 each bind pyridoxal 5'-phosphate; that span reads GA. Arg137 is a binding site for N(2)-acetyl-L-ornithine. 219–222 contacts pyridoxal 5'-phosphate; it reads DEVQ. The residue at position 248 (Lys248) is an N6-(pyridoxal phosphate)lysine. Pyridoxal 5'-phosphate is bound at residue Thr276.

This sequence belongs to the class-III pyridoxal-phosphate-dependent aminotransferase family. ArgD subfamily. As to quaternary structure, homodimer. Pyridoxal 5'-phosphate is required as a cofactor.

Its subcellular location is the cytoplasm. The enzyme catalyses N(2)-acetyl-L-ornithine + 2-oxoglutarate = N-acetyl-L-glutamate 5-semialdehyde + L-glutamate. Its pathway is amino-acid biosynthesis; L-arginine biosynthesis; N(2)-acetyl-L-ornithine from L-glutamate: step 4/4. This is Acetylornithine aminotransferase 2 from Bordetella pertussis (strain Tohama I / ATCC BAA-589 / NCTC 13251).